The primary structure comprises 634 residues: Mitochondrial Rho GTPase 1 (634 aa).

Topologically, residues 1-604 (MLCCMRICVC…PRSEEDVEGK (604 aa)) are cytoplasmic. Residues 2–171 (LCCMRICVCG…FFLCQKAVTH (170 aa)) form the Miro 1 domain. GTP is bound by residues 11–18 (GDEGTGKS), 60–64 (DTSAV), and 116–119 (NKSD). 2 EF-hand domains span residues 187-222 (AAVAALQRIFYLSDKDRDGYLSDKEIKDFQMRCFEK) and 307-342 (EGYRFFVNLFLLSDKDNDGGLNDAELASLFAPTPGL). Ca(2+)-binding residues include Asp-200, Asp-202, Asp-204, Tyr-206, Glu-211, Asp-320, Asp-322, Asp-324, and Glu-331. The disordered stretch occupies residues 399–419 (NPSTTAALKVTRPRKRRKRPG). Residues 409-419 (TRPRKRRKRPG) are compositionally biased toward basic residues. One can recognise a Miro 2 domain in the interval 423-589 (RNVVLGHIVG…FVHIAEAAME (167 aa)). GTP contacts are provided by residues 432-439 (GAPGSGKS), 468-472 (ELPGG), and 538-541 (LKAD). A helical; Anchor for type IV membrane protein transmembrane segment spans residues 605 to 625 (WMSWGIALGAVVCAGAAAVMI). At 626–634 (WRRVSGSGV) the chain is on the mitochondrial intermembrane side.

It belongs to the mitochondrial Rho GTPase family.

The protein resides in the mitochondrion outer membrane. Functionally, mitochondrial GTPase involved in mitochondrial trafficking. Probably involved in control of anterograde transport of mitochondria and their subcellular distribution. The protein is Mitochondrial Rho GTPase 1 (gem1) of Emericella nidulans (strain FGSC A4 / ATCC 38163 / CBS 112.46 / NRRL 194 / M139) (Aspergillus nidulans).